The sequence spans 397 residues: MAKGSAGDAPNTRDTSFKRPKIRESCTHCSSQKIRCTKERPACARCVNKGLLCQYNISRRTGTRRHSVRATPEPETTISNAPTSSVAPDSVKIDGKRSPAMSDFALLDGLETFDNSLWHQPITTDIQDIDMQYFDFFDPGGYQAEPEPINSFDIDSTLLCGTSTAGYLPELDAEASTRPSSSSSPPSQRSDGGRATTHGGGGCISTALQIFSELHVSSSACPIAAGAPSHNIREFDHVLDSNRAALEKLSSILDCPPCCHDQEVLTALFLAVQKALSWYSAALDVAGDGEPTSPSSRVKSPPAFLGSYALGAQAQTLARAYVVMAQLQQHFQPLLAKLQRISSLSALGARSSSTTSLSSVSSLQSSTSGSAVIECQKRALQEALEDVVAKIEGIKRG.

The segment at residues 26 to 53 (CTHCSSQKIRCTKERPACARCVNKGLLC) is a DNA-binding region (zn(2)-C6 fungal-type). 2 disordered regions span residues 63-90 (TRRH…APDS) and 173-198 (AEAS…ATTH). A compositionally biased stretch (polar residues) spans 74-87 (PETTISNAPTSSVA). Low complexity predominate over residues 179-197 (PSSSSSPPSQRSDGGRATT).

The protein resides in the nucleus. Its function is as follows. Transcription regulator of the gene cluster that mediates the biosynthesis of cercosporin, a light-activated, non-host-selective toxin. The perylenequinone chromophore of cercosporin absorbs light energy to attain an electronically-activated triplet state and produces active oxygen species such as the hydroxyl radical, superoxide, hydrogen peroxide or singlet oxygen upon reaction with oxygen molecules. These reactive oxygen species cause damage to various cellular components including lipids, proteins and nucleic acids. The protein is Cercosporin biosynthesis regulatory protein CTB8 of Cercospora beticola (Sugarbeet leaf spot fungus).